We begin with the raw amino-acid sequence, 795 residues long: Phenylalanine--tRNA ligase beta subunit (795 aa).

In terms of domain architecture, tRNA-binding spans 39–148; it reads AAKFNGVLVG…SDAPVGTDLR (110 aa). The region spanning 401-476 is the B5 domain; that stretch reads PKVTEVRLRR…RVYGYNSIPN (76 aa). Mg(2+) is bound by residues Asp454, Asp460, Glu463, and Glu464. Residues 701 to 794 form the FDX-ACB domain; it reads SKFPSNRRDI…LAEQFNASLR (94 aa).

It belongs to the phenylalanyl-tRNA synthetase beta subunit family. Type 1 subfamily. Tetramer of two alpha and two beta subunits. Mg(2+) serves as cofactor.

The protein resides in the cytoplasm. It carries out the reaction tRNA(Phe) + L-phenylalanine + ATP = L-phenylalanyl-tRNA(Phe) + AMP + diphosphate + H(+). This Pseudoalteromonas translucida (strain TAC 125) protein is Phenylalanine--tRNA ligase beta subunit.